The following is a 250-amino-acid chain: Acetylglutamate kinase (250 aa).

Substrate is bound by residues 41–42, arginine 63, and asparagine 156; that span reads GG.

This sequence belongs to the acetylglutamate kinase family. ArgB subfamily.

The protein localises to the cytoplasm. It carries out the reaction N-acetyl-L-glutamate + ATP = N-acetyl-L-glutamyl 5-phosphate + ADP. It functions in the pathway amino-acid biosynthesis; L-arginine biosynthesis; N(2)-acetyl-L-ornithine from L-glutamate: step 2/4. In terms of biological role, catalyzes the ATP-dependent phosphorylation of N-acetyl-L-glutamate. The sequence is that of Acetylglutamate kinase from Listeria monocytogenes serotype 4a (strain HCC23).